A 209-amino-acid polypeptide reads, in one-letter code: Protein Nef (209 aa).

Gly-2 carries N-myristoyl glycine; by host lipidation. Ser-6 carries the post-translational modification Phosphoserine; by host. Disordered stretches follow at residues 16–35 (IRERIRRTPPTETGVGAVSQ) and 43–71 (DKCGAAASSSPAANNASCEPPEEEEEVGF). A compositionally biased stretch (low complexity) spans 47–61 (AAASSSPAANNASCE). An acidic; interacts with host PACS1 and PACS2; stabilizes the interaction of NEF/MHC-I with host AP1M1; necessary for MHC-I internalization region spans residues 65-68 (EEEE). An SH3-binding; interaction with Src family tyrosine kinases region spans residues 72–81 (PVRPQVPLRP). Positions 75-78 (PQVP) match the PxxP; stabilizes the interaction of NEF/MHC-I with host AP1M1; necessary for MHC-I internalization motif. The mediates dimerization, Nef-PTE1 interaction stretch occupies residues 111–127 (EILDLWVYHTQGYFPDW). A binding to ATP6V1H region spans residues 151-183 (MSPEEVEEANEGENNCLLHPISQHGMEDAEREV). The Dileucine internalization motif; necessary for CD4 internalization signature appears at 167 to 168 (LL). Residues 177 to 178 (ED) carry the Diacidic; necessary for CD4 internalization motif.

It belongs to the lentivirus primate group Nef protein family. Monomer; cytosolic form. Homodimer; membrane bound form. Interacts with Nef associated p21-activated kinase (PAK2); this interaction activates PAK2. Associates with the Nef-MHC-I-AP1 complex; this complex is required for MHC-I internalization. Interacts (via C-terminus) with host PI3-kinase. Interacts with host PACS1; this interaction seems to be weak. Interacts with host PACS2. Interacts with host LCK and MAPK3; these interactions inhibit the kinase activity of the latter. Interacts with host ATP6V1H; this interaction may play a role in CD4 endocytosis. Associates with the CD4-Nef-AP2 complex; this complex is required for CD4 internalization. Interacts with host AP2 subunit alpha and AP2 subunit sigma2. Interacts with TCR-zeta chain; this interaction up-regulates the Fas ligand (FasL) surface expression. Interacts with host HCK, LYN, and SRC; these interactions activate the Src family kinases. Interacts with MAP3K5; this interaction inhibits the Fas and TNFR-mediated death signals. Interacts with beta-COP and PTE1. Interacts with human RACK1; this increases Nef phosphorylation by PKC. Interacts with TP53; this interaction decreases the half-life of TP53, protecting the infected cell against p53-mediated apoptosis. The virion-associated Nef proteins are cleaved by the viral protease to release the soluble C-terminal core protein. Nef is probably cleaved concomitantly with viral structural proteins on maturation of virus particles. Post-translationally, myristoylated. In terms of processing, phosphorylated on serine residues, probably by host PKCdelta and theta.

The protein localises to the host cell membrane. It localises to the virion. Its subcellular location is the secreted. The protein resides in the host Golgi apparatus membrane. Functionally, factor of infectivity and pathogenicity, required for optimal virus replication. Alters numerous pathways of T-lymphocyte function and down-regulates immunity surface molecules in order to evade host defense and increase viral infectivity. Alters the functionality of other immunity cells, like dendritic cells, monocytes/macrophages and NK cells. In terms of biological role, in infected CD4(+) T-lymphocytes, down-regulates the surface MHC-I, mature MHC-II, CD4, CD28, CCR5 and CXCR4 molecules. Mediates internalization and degradation of host CD4 through the interaction of with the cytoplasmic tail of CD4, the recruitment of AP-2 (clathrin adapter protein complex 2), internalization through clathrin coated pits, and subsequent transport to endosomes and lysosomes for degradation. Diverts host MHC-I molecules to the trans-Golgi network-associated endosomal compartments by an endocytic pathway to finally target them for degradation. MHC-I down-regulation may involve AP-1 (clathrin adapter protein complex 1) or possibly Src family kinase-ZAP70/Syk-PI3K cascade recruited by PACS2. In consequence infected cells are masked for immune recognition by cytotoxic T-lymphocytes. Decreasing the number of immune receptors also prevents reinfection by more HIV particles (superinfection). Down-regulates host SERINC3 and SERINC5 thereby excluding these proteins from the viral particles. Virion infectivity is drastically higher when SERINC3 or SERINC5 are excluded from the viral envelope, because these host antiviral proteins impair the membrane fusion event necessary for subsequent virion penetration. Its function is as follows. Bypasses host T-cell signaling by inducing a transcriptional program nearly identical to that of anti-CD3 cell activation. Interaction with TCR-zeta chain up-regulates the Fas ligand (FasL). Increasing surface FasL molecules and decreasing surface MHC-I molecules on infected CD4(+) cells send attacking cytotoxic CD8+ T-lymphocytes into apoptosis. Plays a role in optimizing the host cell environment for viral replication without causing cell death by apoptosis. Protects the infected cells from apoptosis in order to keep them alive until the next virus generation is ready to strike. Inhibits the Fas and TNFR-mediated death signals by blocking MAP3K5/ASK1. Decreases the half-life of TP53, protecting the infected cell against p53-mediated apoptosis. Inhibits the apoptotic signals regulated by the Bcl-2 family proteins through the formation of a Nef/PI3-kinase/PAK2 complex that leads to activation of PAK2 and induces phosphorylation of host BAD. Functionally, extracellular Nef protein targets CD4(+) T-lymphocytes for apoptosis by interacting with CXCR4 surface receptors. This chain is Protein Nef, found in Human immunodeficiency virus type 1 group M subtype A (isolate MAL) (HIV-1).